The following is a 359-amino-acid chain: Peptide chain release factor 1 (359 aa).

N5-methylglutamine is present on glutamine 235.

Belongs to the prokaryotic/mitochondrial release factor family. Post-translationally, methylated by PrmC. Methylation increases the termination efficiency of RF1.

It is found in the cytoplasm. Its function is as follows. Peptide chain release factor 1 directs the termination of translation in response to the peptide chain termination codons UAG and UAA. This Anaplasma marginale (strain Florida) protein is Peptide chain release factor 1.